A 48-amino-acid chain; its full sequence is ATP synthase protein 8 (48 aa).

Residues 13–32 form a helical membrane-spanning segment; that stretch reads LTYGFLLMITLLILFSQFFL.

Belongs to the ATPase protein 8 family. As to quaternary structure, F-type ATPases have 2 components, CF(1) - the catalytic core - and CF(0) - the membrane proton channel. In yeast, the dimeric form of ATP synthase consists of 17 polypeptides: alpha, beta, gamma, delta, epsilon, 4 (B), 5 (OSCP), 6 (A), 8, 9 (C), d, E (Tim11), f, g, h, i/j and k.

It localises to the mitochondrion membrane. Functionally, mitochondrial membrane ATP synthase (F(1)F(0) ATP synthase or Complex V) produces ATP from ADP in the presence of a proton gradient across the membrane which is generated by electron transport complexes of the respiratory chain. F-type ATPases consist of two structural domains, F(1) - containing the extramembraneous catalytic core and F(0) - containing the membrane proton channel, linked together by a central stalk and a peripheral stalk. During catalysis, ATP synthesis in the catalytic domain of F(1) is coupled via a rotary mechanism of the central stalk subunits to proton translocation. Part of the complex F(0) domain. Minor subunit located with subunit a in the membrane. In Saccharomyces cerevisiae (strain ATCC 204508 / S288c) (Baker's yeast), this protein is ATP synthase protein 8 (ATP8).